A 435-amino-acid chain; its full sequence is Serine--tRNA ligase (435 aa).

The segment at 41-70 is disordered; sequence QVKTEELQAQRNSRSKSIGQAKAKGDHEEA. Residues 49–58 are compositionally biased toward polar residues; that stretch reads AQRNSRSKSI. 242–244 provides a ligand contact to L-serine; that stretch reads TAE. 273 to 275 is an ATP binding site; it reads RSE. Glu296 is an L-serine binding site. Residue 360-363 coordinates ATP; that stretch reads EISS. Position 396 (Ser396) interacts with L-serine.

Belongs to the class-II aminoacyl-tRNA synthetase family. Type-1 seryl-tRNA synthetase subfamily. Homodimer. The tRNA molecule binds across the dimer.

Its subcellular location is the cytoplasm. The catalysed reaction is tRNA(Ser) + L-serine + ATP = L-seryl-tRNA(Ser) + AMP + diphosphate + H(+). It carries out the reaction tRNA(Sec) + L-serine + ATP = L-seryl-tRNA(Sec) + AMP + diphosphate + H(+). It functions in the pathway aminoacyl-tRNA biosynthesis; selenocysteinyl-tRNA(Sec) biosynthesis; L-seryl-tRNA(Sec) from L-serine and tRNA(Sec): step 1/1. Its function is as follows. Catalyzes the attachment of serine to tRNA(Ser). Is also able to aminoacylate tRNA(Sec) with serine, to form the misacylated tRNA L-seryl-tRNA(Sec), which will be further converted into selenocysteinyl-tRNA(Sec). The sequence is that of Serine--tRNA ligase from Aliivibrio fischeri (strain MJ11) (Vibrio fischeri).